Consider the following 952-residue polypeptide: Anion exchange protein 4 (952 aa).

The disordered stretch occupies residues M1 to I41. The segment covering S12 to E22 has biased composition (basic and acidic residues). Helical transmembrane passes span A385–G405, G413–G433, V470–V490, and F501–I521. N546 and N569 each carry an N-linked (GlcNAc...) asparagine glycan. Helical transmembrane passes span V593 to A613, F634 to T654, P681 to M701, L727 to S747, G784 to I804, P807 to V827, and V870 to I890. Residues E915–L938 form a disordered region. Residues N920, N931, and N948 are each glycosylated (N-linked (GlcNAc...) asparagine).

The protein belongs to the anion exchanger (TC 2.A.31) family. As to expression, expressed in submandibular gland (SMG) duct and cortical collecting duct (CCD) of kidney. Lower expressed in duodenal villi.

The protein resides in the basolateral cell membrane. The catalysed reaction is 2 hydrogencarbonate(out) + chloride(in) + Na(+)(out) = 2 hydrogencarbonate(in) + chloride(out) + Na(+)(in). It catalyses the reaction K(+)(in) + 2 hydrogencarbonate(in) + chloride(out) = K(+)(out) + 2 hydrogencarbonate(out) + chloride(in). The enzyme catalyses Li(+)(in) + 2 hydrogencarbonate(in) + chloride(out) = Li(+)(out) + 2 hydrogencarbonate(out) + chloride(in). It carries out the reaction Rb(+)(in) + 2 hydrogencarbonate(in) + chloride(out) = Rb(+)(out) + 2 hydrogencarbonate(out) + chloride(in). The catalysed reaction is Cs(+)(in) + 2 hydrogencarbonate(in) + chloride(out) = Cs(+)(out) + 2 hydrogencarbonate(out) + chloride(in). With respect to regulation, cl(-)/HCO3(-) exchanger activity is substantially increased in response to 5 uM isoproterenol. Cl(-)/HCO3(-) exchanger activity is increased by both forskolin and coexpression with the catalytic subunit alpha of PKA. In terms of biological role, electroneutral Cl(-)/HCO3(-) antiporter that favors chloride ion entry and efflux of hydrogencarbonate and sodium ion across the basolateral membrane and may participate in salivary secretion. Also mediates Cl(-)/HCO3(-) exchange activity in the presence of K(+) as well as Cs(+), Li(+), and Rb(+). Does not contribute to Cl(-)/HCO3(-) exchanger in the apical membrane of the upper villous epithelium. The protein is Anion exchange protein 4 of Mus musculus (Mouse).